The chain runs to 542 residues: uncharacterized protein (542 aa).

12 consecutive transmembrane segments (helical) span residues 12–32, 57–77, 94–114, 123–143, 168–188, 191–211, 216–236, 243–263, 277–297, 313–333, 358–378, and 391–411; these read LVFG…GTVL, FGDV…AILY, VIVM…SWTA, AAAV…AGLA, LFAV…AALV, FVVS…LVTL, IDAP…AFLL, SGVV…PTVI, IATF…IPGA, VLAL…VQAT, VTSW…AVPM, and LIIF…GTSL.

Belongs to the monovalent cation:proton antiporter 1 (CPA1) transporter (TC 2.A.36) family.

It is found in the cell membrane. This is an uncharacterized protein from Mycobacterium bovis (strain ATCC BAA-935 / AF2122/97).